A 428-amino-acid polypeptide reads, in one-letter code: tRNA(Ile)-lysidine synthase (428 aa).

28–33 (SGGVDS) contacts ATP.

Belongs to the tRNA(Ile)-lysidine synthase family.

The protein localises to the cytoplasm. The catalysed reaction is cytidine(34) in tRNA(Ile2) + L-lysine + ATP = lysidine(34) in tRNA(Ile2) + AMP + diphosphate + H(+). Functionally, ligates lysine onto the cytidine present at position 34 of the AUA codon-specific tRNA(Ile) that contains the anticodon CAU, in an ATP-dependent manner. Cytidine is converted to lysidine, thus changing the amino acid specificity of the tRNA from methionine to isoleucine. This is tRNA(Ile)-lysidine synthase from Streptococcus pyogenes serotype M18 (strain MGAS8232).